The sequence spans 737 residues: DNA topoisomerase 4 subunit A (737 aa).

Residues 32 to 496 (LPDVRDGLKP…SFEEVTLTNQ (465 aa)) enclose the Topo IIA-type catalytic domain. Catalysis depends on Tyr-120, which acts as the O-(5'-phospho-DNA)-tyrosine intermediate.

The protein belongs to the type II topoisomerase GyrA/ParC subunit family. ParC type 1 subfamily. In terms of assembly, heterotetramer composed of ParC and ParE.

Its subcellular location is the cell membrane. It carries out the reaction ATP-dependent breakage, passage and rejoining of double-stranded DNA.. Topoisomerase IV is essential for chromosome segregation. It relaxes supercoiled DNA. Performs the decatenation events required during the replication of a circular DNA molecule. This is DNA topoisomerase 4 subunit A from Rickettsia felis (strain ATCC VR-1525 / URRWXCal2) (Rickettsia azadi).